The primary structure comprises 625 residues: E3 ubiquitin-protein ligase synoviolin (625 aa).

Over 1 to 4 (MVRA) the chain is Cytoplasmic. A helical membrane pass occupies residues 5–25 (ALVTATSLALTGAVVAHAYFL). The Lumenal segment spans residues 26–40 (KHQFYPTVVYLTKSS). The helical transmembrane segment at 41 to 61 (PSMAVLYIQAFVLVFLLGKLM) threads the bilayer. Residues 62 to 98 (RKVFFGQLRAAEMEHLIERSWYAVTETCLAFTVFRDD) are Cytoplasmic-facing. A helical transmembrane segment spans residues 99-119 (FSPRFVALFTLLLFLKCFHWL). Over 120–135 (AEDRVDFMERSPNISW) the chain is Lumenal. The chain crosses the membrane as a helical span at residues 136-156 (VFHFRVLSLMVLLGVMDFLFV). Residues 157–169 (NHACHSIITRGAS) lie on the Cytoplasmic side of the membrane. Residues 170–190 (VQLVFGFEYAILMTMVLTTFI) traverse the membrane as a helical segment. At 191 to 212 (KYTLHTIDLQSENPWDNKAVYM) the chain is on the lumenal side. A helical transmembrane segment spans residues 213–235 (LYTELFTGFIKVLLYMAFMTIMI). The tract at residues 236 to 270 (KVHTFPLFAIRPMYLAMRQFKKAVTDAIMSRRAIR) is interaction with p53/TP53. Topologically, residues 236–625 (KVHTFPLFAI…GNLLKLASVN (390 aa)) are cytoplasmic. Residues Cys291, Cys294, Cys307, His309, His312, Cys315, Cys326, and Cys329 each coordinate Zn(2+). An RING-type; atypical zinc finger spans residues 291–330 (CIICREEMVTGAKKLPCNHIFHSSCLRSWFQRQQTCPTCR). Disordered regions lie at residues 337–361 (SQPN…NAPI), 390–434 (PPPA…SAAP), 462–487 (FMSS…LEQE), and 523–625 (LSPP…ASVN). The segment covering 342-361 (TPAPPAAQAPAPPAPANAPI) has biased composition (pro residues). A compositionally biased stretch (low complexity) spans 423–434 (AQSTAEAASAAP). Positions 462–471 (FMSSMPPPPS) are enriched in pro residues. Polar residues predominate over residues 523 to 564 (LSPPRSETNTGETSESANVESSPSTANTETAGQEIQSQSGES).

Belongs to the HRD1 family. In terms of assembly, homodimer.

The protein localises to the endoplasmic reticulum membrane. The enzyme catalyses S-ubiquitinyl-[E2 ubiquitin-conjugating enzyme]-L-cysteine + [acceptor protein]-L-lysine = [E2 ubiquitin-conjugating enzyme]-L-cysteine + N(6)-ubiquitinyl-[acceptor protein]-L-lysine.. It participates in protein modification; protein ubiquitination. Functionally, E3 ubiquitin-protein ligase which accepts ubiquitin specifically from endoplasmic reticulum-associated UBC7 E2 ligase and transfers it to substrates, promoting their degradation. Component of the endoplasmic reticulum quality control (ERQC) system also called ER-associated degradation (ERAD) involved in ubiquitin-dependent degradation of misfolded endoplasmic reticulum proteins. Also promotes the degradation of normal but naturally short-lived proteins. Protects cells from ER stress-induced apoptosis. Sequesters p53 in the cytoplasm and promotes its degradation, thereby negatively regulating its biological function in transcription, cell cycle regulation and apoptosis. This is E3 ubiquitin-protein ligase synoviolin (syvn1) from Danio rerio (Zebrafish).